Here is a 967-residue protein sequence, read N- to C-terminus: Leucine--tRNA ligase (967 aa).

Positions 43-53 match the 'HIGH' region motif; sequence PYLSGHLHVGH. Residues 650–654 carry the 'KMSKS' region motif; that stretch reads KMSKS. Residue K653 participates in ATP binding.

It belongs to the class-I aminoacyl-tRNA synthetase family.

The protein localises to the cytoplasm. The catalysed reaction is tRNA(Leu) + L-leucine + ATP = L-leucyl-tRNA(Leu) + AMP + diphosphate. This is Leucine--tRNA ligase from Thermococcus onnurineus (strain NA1).